A 413-amino-acid chain; its full sequence is Serine/threonine-protein kinase ppk27 (413 aa).

The Protein kinase domain occupies 102–403; that stretch reads WSINTKITST…LKDFNKHGNF (302 aa). Residues 108–116 and Lys133 each bind ATP; that span reads ITSTEQREV. Asp231 (proton acceptor) is an active-site residue.

Belongs to the protein kinase superfamily. Ser/Thr protein kinase family.

It is found in the cytoplasm. It catalyses the reaction L-seryl-[protein] + ATP = O-phospho-L-seryl-[protein] + ADP + H(+). The enzyme catalyses L-threonyl-[protein] + ATP = O-phospho-L-threonyl-[protein] + ADP + H(+). This Schizosaccharomyces pombe (strain 972 / ATCC 24843) (Fission yeast) protein is Serine/threonine-protein kinase ppk27 (ppk27).